Here is a 378-residue protein sequence, read N- to C-terminus: Chitinase (378 aa).

Residues 1–28 form the signal peptide; that stretch reads MNFTVKYSFLVICLLCCLLSTYVSVIEG. Positions 53–378 constitute a GH18 domain; the sequence is GIIQGYYPSW…AIEYFVESLH (326 aa). E174 functions as the Proton donor in the catalytic mechanism. A disulfide bridge links C220 with C230.

The protein belongs to the glycosyl hydrolase 18 family. In terms of assembly, forms a hetero-multimeric, high molecular weight complex composed of at least CHT1, SOAP AND WARP. Within the complex, may interact with WARP via a disulfide bond.

The protein localises to the secreted. The protein resides in the cytoplasmic vesicle. It localises to the secretory vesicle. Its subcellular location is the microneme. The catalysed reaction is Random endo-hydrolysis of N-acetyl-beta-D-glucosaminide (1-&gt;4)-beta-linkages in chitin and chitodextrins.. With respect to regulation, inhibited by allosamidin. Functionally, endochitinase that cleaves beta-1,4-linkages between tri- and tetramers of N-acetylglucosamine (GlcNAc) from penta- and hexameric chitin oligomers. Does not cleave smaller chitin oligosaccharides. Required to cross the acellular, chitin-containing peritrophic matrix (PM) which is formed around the ingested blood meal in the mosquito midgut allowing the ookinete to invade the mosquito gut epithelium. This Plasmodium falciparum (isolate 3D7) protein is Chitinase.